The sequence spans 89 residues: Putative regulatory protein CYA_2696 (89 aa).

This sequence belongs to the RemA family.

This Synechococcus sp. (strain JA-3-3Ab) (Cyanobacteria bacterium Yellowstone A-Prime) protein is Putative regulatory protein CYA_2696.